Reading from the N-terminus, the 238-residue chain is Probable transcriptional regulatory protein YcdB (238 aa).

It belongs to the TACO1 family. YeeN subfamily.

It is found in the cytoplasm. The chain is Probable transcriptional regulatory protein YcdB (ycdB) from Lactococcus lactis subsp. lactis (strain IL1403) (Streptococcus lactis).